Consider the following 235-residue polypeptide: Urease accessory protein UreF (235 aa).

Belongs to the UreF family. As to quaternary structure, ureD, UreF and UreG form a complex that acts as a GTP-hydrolysis-dependent molecular chaperone, activating the urease apoprotein by helping to assemble the nickel containing metallocenter of UreC. The UreE protein probably delivers the nickel.

It is found in the cytoplasm. Required for maturation of urease via the functional incorporation of the urease nickel metallocenter. The sequence is that of Urease accessory protein UreF from Pseudoalteromonas translucida (strain TAC 125).